The primary structure comprises 473 residues: Glycine receptor subunit beta-type 4 (473 aa).

The first 19 residues, 1 to 19 (MHSLFLKILIYSLMQCVLG), serve as a signal peptide directing secretion. Over 20–249 (QAEFWDYDEN…EFHVDREITH (230 aa)) the chain is Extracellular. N-linked (GlcNAc...) asparagine glycosylation is found at N29, N105, and N151. C166 and C180 are disulfide-bonded. A helical membrane pass occupies residues 250–271 (HIIQSYIPTSLIVIISWFSFWL). Over 272-276 (DVEAV) the chain is Cytoplasmic. Residues 277–297 (PGRVSLSITTLLTLATQSSAA) form a helical membrane-spanning segment. Over 298–308 (RMALPQASDVK) the chain is Extracellular. Residues 309–329 (AIDVWMGTCMAFVFSAMIEFT) form a helical membrane-spanning segment. Residues 330-439 (VVNYCVRRKV…NRKNAQKIDR (110 aa)) lie on the Cytoplasmic side of the membrane. Residues 440-460 (YSRALFPLAFIIFNIFYWIYY) traverse the membrane as a helical segment. At 461-473 (LKYAGSNSPELLL) the chain is on the extracellular side.

The protein belongs to the ligand-gated ion channel (TC 1.A.9) family. Glycine receptor (TC 1.A.9.3) subfamily. In terms of assembly, pentamer.

It localises to the postsynaptic cell membrane. It is found in the synapse. Its subcellular location is the cell membrane. Its function is as follows. Glycine receptors are ligand-gated chloride channels. Channel opening is triggered by extracellular glycine. Contributes to the generation of inhibitory postsynaptic currents. The polypeptide is Glycine receptor subunit beta-type 4 (Caenorhabditis elegans).